We begin with the raw amino-acid sequence, 139 residues long: Small ribosomal subunit protein uS11 (139 aa).

A disordered region spans residues 117–139 (VEDVTPIPHDGTRPKGGRRGRRV).

Belongs to the universal ribosomal protein uS11 family. In terms of assembly, part of the 30S ribosomal subunit.

Located on the platform of the 30S subunit. The protein is Small ribosomal subunit protein uS11 of Thermococcus onnurineus (strain NA1).